We begin with the raw amino-acid sequence, 234 residues long: Sugar fermentation stimulation protein homolog (234 aa).

Belongs to the SfsA family.

This chain is Sugar fermentation stimulation protein homolog, found in Pectobacterium carotovorum subsp. carotovorum (strain PC1).